A 589-amino-acid polypeptide reads, in one-letter code: Protein NRT1/ PTR FAMILY 7.2 (589 aa).

2 helical membrane passes run 32–52 and 78–98; these read WLTA…FFGV and WTGT…SYWG. The residue at position 102 (threonine 102) is a Phosphothreonine. 10 consecutive transmembrane segments (helical) span residues 105-125, 147-167, 187-207, 217-237, 343-363, 377-397, 423-443, 464-484, 504-524, and 548-568; these read IFQA…GALL, VLFY…QPNI, IAFF…SNTV, WPLG…LFLI, IWLC…LFVV, IPAS…IFAY, MGIG…VEIH, IFWQ…MYVG, LCMA…SIVM, and FYFL…ICAK.

The protein belongs to the major facilitator superfamily. Proton-dependent oligopeptide transporter (POT/PTR) (TC 2.A.17) family. Expressed in xylem parenchyma cells within the vasculature. Expressed in siliques and flowers. Higher expression in shoots than in roots.

It is found in the cell membrane. Low-affinity nitrate transporter. Involved in nitrate removal from xylem sap. Not involved in oligopeptides transport. This Arabidopsis thaliana (Mouse-ear cress) protein is Protein NRT1/ PTR FAMILY 7.2 (NPF7.2).